A 236-amino-acid chain; its full sequence is MGQKINPIGLRLGVNRTWDSRWYANTGEYGKLLHEDVKIREFLTEELKQAAISKIVIERPHKKCRVTIHSARPGIIIGKKGADIEKLRKKLSEMTNADTSLNIVEVRKPEVDATLIAQSIAQQLERRVAFRRAMKRAVQSAMRLGAEGIRINCSGRLGGAEIARMEWYREGRVPLHTLRADIDYGTAEAKTAYGICGVKVWVFKGEILEHDPMASERRAVEGDNQGSSSNRRRENA.

The region spanning 39–107 (IREFLTEELK…DTSLNIVEVR (69 aa)) is the KH type-2 domain. A disordered region spans residues 214–236 (ASERRAVEGDNQGSSSNRRRENA).

This sequence belongs to the universal ribosomal protein uS3 family. As to quaternary structure, part of the 30S ribosomal subunit. Forms a tight complex with proteins S10 and S14.

In terms of biological role, binds the lower part of the 30S subunit head. Binds mRNA in the 70S ribosome, positioning it for translation. The sequence is that of Small ribosomal subunit protein uS3 from Brucella melitensis biotype 1 (strain ATCC 23456 / CCUG 17765 / NCTC 10094 / 16M).